Consider the following 222-residue polypeptide: Eukaryotic translation initiation factor 3 subunit K (222 aa).

One can recognise a PCI domain in the interval 46 to 208; it reads YDLEANLAVL…KIKTKNITEK (163 aa).

It belongs to the eIF-3 subunit K family. Component of the eukaryotic translation initiation factor 3 (eIF-3) complex. The eIF-3 complex interacts with pix.

The protein resides in the cytoplasm. In terms of biological role, component of the eukaryotic translation initiation factor 3 (eIF-3) complex, which is involved in protein synthesis of a specialized repertoire of mRNAs and, together with other initiation factors, stimulates binding of mRNA and methionyl-tRNAi to the 40S ribosome. The eIF-3 complex specifically targets and initiates translation of a subset of mRNAs involved in cell proliferation. The chain is Eukaryotic translation initiation factor 3 subunit K from Drosophila ananassae (Fruit fly).